Consider the following 333-residue polypeptide: Ferredoxin--NADP reductase (333 aa).

Residues Asp-32, Gln-40, Tyr-45, Ala-85, Phe-119, Asp-285, and Thr-326 each coordinate FAD.

Belongs to the ferredoxin--NADP reductase type 2 family. As to quaternary structure, homodimer. The cofactor is FAD.

The enzyme catalyses 2 reduced [2Fe-2S]-[ferredoxin] + NADP(+) + H(+) = 2 oxidized [2Fe-2S]-[ferredoxin] + NADPH. The polypeptide is Ferredoxin--NADP reductase (Neorickettsia sennetsu (strain ATCC VR-367 / Miyayama) (Ehrlichia sennetsu)).